Reading from the N-terminus, the 448-residue chain is Pentatricopeptide repeat-containing protein At1g80550, mitochondrial (448 aa).

The transit peptide at 1-21 (MLLLRRLNRVRIASPYSVRLL) directs the protein to the mitochondrion. 10 PPR repeats span residues 80 to 110 (TTET…MIGN), 116 to 146 (NHVT…LDDF), 150 to 186 (DETS…GFSV), 188 to 222 (NTKI…GVTK), 223 to 257 (DLFS…RMKL), 258 to 292 (DVVA…GCEP), 293 to 327 (NVAT…GCQP), 331 to 359 (TYMC…GVRP), 360 to 394 (KMDT…GDTP), and 395 to 429 (DSAA…GLSP).

It belongs to the PPR family. P subfamily.

It is found in the mitochondrion. In Arabidopsis thaliana (Mouse-ear cress), this protein is Pentatricopeptide repeat-containing protein At1g80550, mitochondrial.